The following is a 297-amino-acid chain: N-acetylneuraminate lyase (297 aa).

Aceneuramate contacts are provided by S47 and T48. Residue Y137 is the Proton donor of the active site. Residue K165 is the Schiff-base intermediate with substrate of the active site. Aceneuramate contacts are provided by T167, G189, D191, E192, and S208.

It belongs to the DapA family. NanA subfamily. Homotetramer.

The protein localises to the cytoplasm. It carries out the reaction aceneuramate = aldehydo-N-acetyl-D-mannosamine + pyruvate. It functions in the pathway amino-sugar metabolism; N-acetylneuraminate degradation; D-fructose 6-phosphate from N-acetylneuraminate: step 1/5. Catalyzes the reversible aldol cleavage of N-acetylneuraminic acid (sialic acid; Neu5Ac) to form pyruvate and N-acetylmannosamine (ManNAc) via a Schiff base intermediate. In Salmonella agona (strain SL483), this protein is N-acetylneuraminate lyase.